We begin with the raw amino-acid sequence, 853 residues long: MSTIENFDAHTPMMQQYLKLKAQHPEILLFYRMGDFYELFYDDAKRASQLLDISLTKRGASAGEPIPMAGIPYHAVENYLAKLVNQGESVAICEQIGDPATSKGPVERKVVRIVTPGTISDEALLQERQDNLLAAIWQDSKGFGYATLDISSGRFRLSEPADRETMAAELQRTNPAELLYAEDFAEMSLIEGRRGLRRRPLWEFEIDTARQQLNLQFGTRDLVGFGVENAPRGLCAAGCLLQYAKDTQRTTLPHIRSITMERQQDSIIMDAATRRNLEITQNLAGGAENTLTSVLDCTVTPMGSRMLKRWLHMPVRDTRVLLERQQTIGALQDFTAELQPVLRQVGDLERILARLALRTARPRDLARMRHAFQQLPELRAQLENVDSAPVQALREKMGEFAELRDLLERAIIDTPPVLVRDGGVIATGYNEELDEWRALADGATDYLERLEVRERERTGLDTLKVGFNAVHGYYIQISRGQSHLAPINYMRRQTLKNAERYIIPELKEYEDKVLTSKGKALALEKQLYEELFDLLLPHLEALQQSASALAELDVLVNLAERAYTLNYTCPTFIDKPGIRITEGRHPVVEQVLNEPFIANPLNLSPQRRMLIITGPNMGGKSTYMRQTALIALMAYIGSYVPAQKVEIGPIDRIFTRVGAADDLASGRSTFMVEMTETANILHNATEYSLVLMDEIGRGTSTYDGLSLAWACAENLANKIKALTLFATHYFELTQLPEKMEGVANVHLDALEHGDTIAFMHSVQDGAASKSYGLAVAALAGVPKEVIKRARQKLRELESISPNAAATQVDGTQMSLLSVPEETSPAVEALENLDPDSLTPRQALEWIYRLKSLV.

614 to 621 provides a ligand contact to ATP; it reads GPNMGGKS.

Belongs to the DNA mismatch repair MutS family.

This protein is involved in the repair of mismatches in DNA. It is possible that it carries out the mismatch recognition step. This protein has a weak ATPase activity. In Escherichia coli O127:H6 (strain E2348/69 / EPEC), this protein is DNA mismatch repair protein MutS.